A 166-amino-acid chain; its full sequence is Phosphopantetheine adenylyltransferase (166 aa).

A substrate-binding site is contributed by Thr-10. ATP is bound by residues Thr-10–Phe-11 and His-18. Residues Lys-42, Leu-74, and Arg-88 each coordinate substrate. Residues Gly-89–Arg-91, Glu-99, and Asn-124–Ser-130 each bind ATP.

The protein belongs to the bacterial CoaD family. As to quaternary structure, homohexamer. Mg(2+) is required as a cofactor.

It localises to the cytoplasm. It carries out the reaction (R)-4'-phosphopantetheine + ATP + H(+) = 3'-dephospho-CoA + diphosphate. It functions in the pathway cofactor biosynthesis; coenzyme A biosynthesis; CoA from (R)-pantothenate: step 4/5. Reversibly transfers an adenylyl group from ATP to 4'-phosphopantetheine, yielding dephospho-CoA (dPCoA) and pyrophosphate. The polypeptide is Phosphopantetheine adenylyltransferase (Idiomarina loihiensis (strain ATCC BAA-735 / DSM 15497 / L2-TR)).